A 1184-amino-acid chain; its full sequence is DNA-directed RNA polymerase subunit beta' (1184 aa).

Zn(2+)-binding residues include Cys60, Cys62, Cys75, and Cys78. The Mg(2+) site is built by Asp449, Asp451, and Asp453. Cys794, Cys867, Cys874, and Cys877 together coordinate Zn(2+). The segment at 1165-1184 is disordered; the sequence is NDQQERQDKEKEETEVKASN.

Belongs to the RNA polymerase beta' chain family. As to quaternary structure, the RNAP catalytic core consists of 2 alpha, 1 beta, 1 beta' and 1 omega subunit. When a sigma factor is associated with the core the holoenzyme is formed, which can initiate transcription. Mg(2+) serves as cofactor. It depends on Zn(2+) as a cofactor.

The catalysed reaction is RNA(n) + a ribonucleoside 5'-triphosphate = RNA(n+1) + diphosphate. DNA-dependent RNA polymerase catalyzes the transcription of DNA into RNA using the four ribonucleoside triphosphates as substrates. In Thermoanaerobacter pseudethanolicus (strain ATCC 33223 / 39E) (Clostridium thermohydrosulfuricum), this protein is DNA-directed RNA polymerase subunit beta'.